Here is a 113-residue protein sequence, read N- to C-terminus: Large ribosomal subunit protein bL19 (113 aa).

The protein belongs to the bacterial ribosomal protein bL19 family.

In terms of biological role, this protein is located at the 30S-50S ribosomal subunit interface and may play a role in the structure and function of the aminoacyl-tRNA binding site. The chain is Large ribosomal subunit protein bL19 from Rhodococcus jostii (strain RHA1).